The following is a 660-amino-acid chain: MRLVRLLGMVLTILAAGLLLGPPAGAQPPFRLSNYVTDNAGVLTSSGRTAVTAAVDRLYADRRIRLWVVYVENFSGQSALNWAQRTTRTSELGNYDALLAVATTGREYAFLVPSAMPGVSEGQVDNVRRYQIEPALHDGDYSGAAVAAANGLNRSPSSSSRVVLLVTVGIIVIVVAVLLVVMRHRNRRRRADELAAARRVDPTNVMALAAVPLQALDDLSRSMVVDVDNAVRTSTNELALAIEEFGERRTAPFTQAVNNAKAALSQAFTVRQQLDDNTPETPAQRRELLTRVIVSAAHADRELASQTEAFEKLRDLVINAPARLDLLTQQYVELTTRIGPTQQRLAELHTEFDAAAMTSIAGNVTTATERLAFADRNISAARDLADQAVSGRQAGLVDAVRAAESALGQARALLDAVDSAATDIRHAVASLPAVVADIQTGIKRANQHLQQAQQPQTGRTGDLIAARDAAARALDRARGAADPLTAFDQLTKVDADLDRLLATLAEEQATADRLNRSLEQALFTAESRVRAVSEYIDTRRGSIGPEARTRLAEAKRQLEAAHDRKSSNPTEAIAYANAASTLAAHAQSLANADVQSAQRAYTRRGGNNAGAILGGIIIGDLLSGGTRGGLGGWIPTSFGGSSNAPGSSPDGGFLGGGGRF.

Positions Met1–Ala26 are cleaved as a signal peptide. The chain crosses the membrane as a helical span at residues Val162 to Met182. A coiled-coil region spans residues Asp488–Ser567. Residues Gly605–Gly625 traverse the membrane as a helical segment. The tract at residues Phe638–Phe660 is disordered.

This sequence belongs to the UPF0603 family.

It is found in the cell membrane. Functionally, may play a role in septum formation. The polypeptide is UPF0603 protein MT2410 (Mycobacterium tuberculosis (strain CDC 1551 / Oshkosh)).